Here is a 532-residue protein sequence, read N- to C-terminus: Pentatricopeptide repeat-containing protein At4g02820, mitochondrial (532 aa).

The N-terminal 28 residues, 1–28, are a transit peptide targeting the mitochondrion; sequence MNKNMLVRSARPTLASIHRLFSAAAAAT. The segment at 35 to 56 is disordered; that stretch reads PVVKPRSGGGKGGESANKKETV. PPR repeat units follow at residues 161 to 195, 196 to 226, 230 to 264, 265 to 295, 300 to 330, 335 to 365, 370 to 404, 405 to 435, 442 to 472, and 476 to 512; these read GHAA…GFLK, SCLP…LKIR, DIVT…KLNP, DWVT…MEKL, NRVA…VKSS, NDAE…WESV, DARI…GINP, SYST…AIDS, NVRL…LQKA, and NTQL…DEET.

The protein belongs to the PPR family. P subfamily.

The protein resides in the mitochondrion. This Arabidopsis thaliana (Mouse-ear cress) protein is Pentatricopeptide repeat-containing protein At4g02820, mitochondrial.